Consider the following 258-residue polypeptide: MPKTLTEKLNAIKAAGKGIFVPYIMAGDHEKGLDGLAETIHFLEDLGVSAIEVGIPFSDPVADGPVIEEAGLRSLAHGTSTQALVETLKTIETEIPLVIMTYFNPLFQYGVENFVKDLADTAVKGLIIPDLPHEHANFVEPFLADTDIALIPLVSLTTGIERQKELIEGAEGFIYAVAINGVTGKSGNYRADLDKHLAQLHQVADIPVLTGFGVSSQADLERFNAVSDGVIVGSKIVKALHQGEPIQDFIKQAVAYQK.

Catalysis depends on proton acceptor residues E52 and D63.

This sequence belongs to the TrpA family. Tetramer of two alpha and two beta chains.

It catalyses the reaction (1S,2R)-1-C-(indol-3-yl)glycerol 3-phosphate + L-serine = D-glyceraldehyde 3-phosphate + L-tryptophan + H2O. It participates in amino-acid biosynthesis; L-tryptophan biosynthesis; L-tryptophan from chorismate: step 5/5. Its function is as follows. The alpha subunit is responsible for the aldol cleavage of indoleglycerol phosphate to indole and glyceraldehyde 3-phosphate. The sequence is that of Tryptophan synthase alpha chain from Streptococcus pneumoniae (strain ATCC 700669 / Spain 23F-1).